The chain runs to 543 residues: Exodeoxyribonuclease 7 large subunit (543 aa).

Residues 498–543 are disordered; the sequence is VTGEGDKASPPPQAASATTTPAPGRPNPLPKSPKKSEPPAGQGSLF.

This sequence belongs to the XseA family. As to quaternary structure, heterooligomer composed of large and small subunits.

The protein localises to the cytoplasm. It carries out the reaction Exonucleolytic cleavage in either 5'- to 3'- or 3'- to 5'-direction to yield nucleoside 5'-phosphates.. Its function is as follows. Bidirectionally degrades single-stranded DNA into large acid-insoluble oligonucleotides, which are then degraded further into small acid-soluble oligonucleotides. The chain is Exodeoxyribonuclease 7 large subunit from Allorhizobium ampelinum (strain ATCC BAA-846 / DSM 112012 / S4) (Agrobacterium vitis (strain S4)).